A 199-amino-acid polypeptide reads, in one-letter code: Peroxynitrite isomerase (199 aa).

Residues 21–27 (GEWEGRG) carry the GXWXGXG motif. H190 is a heme b binding site.

The protein belongs to the nitrobindin family. In terms of assembly, homodimer. The cofactor is heme b.

It carries out the reaction peroxynitrite = nitrate. The protein operates within nitrogen metabolism. Its function is as follows. Heme-binding protein able to scavenge peroxynitrite and to protect free L-tyrosine against peroxynitrite-mediated nitration, by acting as a peroxynitrite isomerase that converts peroxynitrite to nitrate. Therefore, this protein likely plays a role in peroxynitrite sensing and in the detoxification of reactive nitrogen and oxygen species (RNS and ROS, respectively). Is able to bind nitric oxide (NO) in vitro, but may act as a sensor of peroxynitrite levels in vivo. This is Peroxynitrite isomerase from Paenarthrobacter aurescens (strain TC1).